We begin with the raw amino-acid sequence, 261 residues long: Bcl-2-binding component 3, isoforms 3/4 (261 aa).

The tract at residues 27–261 (QICGPRERHG…ASAGDFLCTM (235 aa)) is disordered. Over residues 40–50 (PGGQLPGARRG) the composition is skewed to low complexity. A compositionally biased stretch (pro residues) spans 53–63 (PRRPAPLPARP). The span at 64 to 73 (PGALGSVLRP) shows a compositional bias: low complexity. Basic residues-rich tracts occupy residues 74 to 87 (LRARPGCRPRRPHP) and 95 to 106 (RPHRPTRRHRRP). Residues 124-146 (PGRSSALALAGGAAPGVARAQRP) are compositionally biased toward low complexity. Gly residues predominate over residues 147-171 (GGSGGRSHPGGPGSPRGGGTVGPGD). The span at 172–197 (RGPAAADGGRPQRTVRAAETRGAAAA) shows a compositional bias: low complexity.

Does not interact with BCL2.

Does not affect cell growth. This Homo sapiens (Human) protein is Bcl-2-binding component 3, isoforms 3/4 (BBC3).